A 129-amino-acid polypeptide reads, in one-letter code: Small ribosomal subunit protein uS12 (129 aa).

The protein belongs to the universal ribosomal protein uS12 family. As to quaternary structure, part of the 30S ribosomal subunit. Contacts proteins S8 and S17. May interact with IF1 in the 30S initiation complex.

Functionally, with S4 and S5 plays an important role in translational accuracy. Its function is as follows. Interacts with and stabilizes bases of the 16S rRNA that are involved in tRNA selection in the A site and with the mRNA backbone. Located at the interface of the 30S and 50S subunits, it traverses the body of the 30S subunit contacting proteins on the other side and probably holding the rRNA structure together. The combined cluster of proteins S8, S12 and S17 appears to hold together the shoulder and platform of the 30S subunit. This chain is Small ribosomal subunit protein uS12, found in Rickettsia typhi (strain ATCC VR-144 / Wilmington).